The chain runs to 199 residues: Imidazoleglycerol-phosphate dehydratase (199 aa).

It belongs to the imidazoleglycerol-phosphate dehydratase family.

The protein localises to the cytoplasm. It carries out the reaction D-erythro-1-(imidazol-4-yl)glycerol 3-phosphate = 3-(imidazol-4-yl)-2-oxopropyl phosphate + H2O. The protein operates within amino-acid biosynthesis; L-histidine biosynthesis; L-histidine from 5-phospho-alpha-D-ribose 1-diphosphate: step 6/9. The sequence is that of Imidazoleglycerol-phosphate dehydratase from Mesorhizobium japonicum (strain LMG 29417 / CECT 9101 / MAFF 303099) (Mesorhizobium loti (strain MAFF 303099)).